The chain runs to 696 residues: Elongation factor G (696 aa).

One can recognise a tr-type G domain in the interval 8–286; sequence EDVRNIGIAA…AVVHYLPSPV (279 aa). GTP-binding positions include 17–24, 81–85, and 135–138; these read AHIDAGKT, DTPGH, and NKMD.

It belongs to the TRAFAC class translation factor GTPase superfamily. Classic translation factor GTPase family. EF-G/EF-2 subfamily.

The protein resides in the cytoplasm. Functionally, catalyzes the GTP-dependent ribosomal translocation step during translation elongation. During this step, the ribosome changes from the pre-translocational (PRE) to the post-translocational (POST) state as the newly formed A-site-bound peptidyl-tRNA and P-site-bound deacylated tRNA move to the P and E sites, respectively. Catalyzes the coordinated movement of the two tRNA molecules, the mRNA and conformational changes in the ribosome. This chain is Elongation factor G, found in Sulfurovum sp. (strain NBC37-1).